The chain runs to 595 residues: Wee1-like protein kinase 1-B (595 aa).

Over residues 1–17 the composition is skewed to polar residues; the sequence is MNVQPRNMNVQPRNMNV. The segment at 1–127 is disordered; that stretch reads MNVQPRNMNV…CPGTPPHKTF (127 aa). The span at 111–122 shows a compositional bias: pro residues; the sequence is PTSPIPECPGTP. Thr-186 is subject to Phosphothreonine; by cdk1. In terms of domain architecture, Protein kinase spans 248–518; the sequence is FHELEKIGSG…SVALVKHSVL (271 aa). ATP-binding positions include 254–262 and Lys-277; that span reads IGSGEFGSV. The active-site Proton acceptor is Asp-375. Mg(2+) contacts are provided by Asn-380 and Asp-412. The stretch at 526–563 forms a coiled coil; it reads AEQLRIELDAEKFKNALLQKELKKAQIAKAAAEERAHF.

This sequence belongs to the protein kinase superfamily. Ser/Thr protein kinase family. WEE1 subfamily. As to quaternary structure, interacts (when phosphorylated at Thr-186) with pin1. In terms of processing, phosphorylation at Thr-186 during M-phase by cdk1 inhibits the kinase activity and leads to interaction with pin1. Zygotically expressed. Present in oocytes and postgastrula embryos (at least until the tailbud stage). Expression begins at the midblastula stage and increases after the early gastrula stage.

It is found in the nucleus. The catalysed reaction is L-tyrosyl-[protein] + ATP = O-phospho-L-tyrosyl-[protein] + ADP + H(+). In terms of biological role, acts as a zygotic negative regulator of entry into mitosis (G2 to M transition) by protecting the nucleus from cytoplasmically activated cyclin B1-complexed cdk1 before the onset of mitosis by mediating phosphorylation of cdk1 on 'Tyr-15'. Specifically phosphorylates and inactivates cyclin B1-complexed cdk1 reaching a maximum during G2 phase and a minimum as cells enter M phase. Phosphorylation of cyclin B1-cdk1 occurs exclusively on 'Tyr-15' and phosphorylation of monomeric cdk1 does not occur. In Xenopus laevis (African clawed frog), this protein is Wee1-like protein kinase 1-B (wee1-b).